We begin with the raw amino-acid sequence, 455 residues long: UDP-N-acetylmuramoylalanine--D-glutamate ligase (455 aa).

Residue 118 to 124 (GTNGKST) coordinates ATP.

Belongs to the MurCDEF family.

The protein localises to the cytoplasm. It carries out the reaction UDP-N-acetyl-alpha-D-muramoyl-L-alanine + D-glutamate + ATP = UDP-N-acetyl-alpha-D-muramoyl-L-alanyl-D-glutamate + ADP + phosphate + H(+). It functions in the pathway cell wall biogenesis; peptidoglycan biosynthesis. Functionally, cell wall formation. Catalyzes the addition of glutamate to the nucleotide precursor UDP-N-acetylmuramoyl-L-alanine (UMA). In Myxococcus xanthus (strain DK1622), this protein is UDP-N-acetylmuramoylalanine--D-glutamate ligase.